The following is a 674-amino-acid chain: ATP-dependent DNA helicase Rep (674 aa).

In terms of domain architecture, UvrD-like helicase ATP-binding spans 1–280; that stretch reads MRLNPGQQHA…IKLEQNYRSS (280 aa). ATP is bound by residues 22–29 and R278; that span reads AGAGSGKT. A UvrD-like helicase C-terminal domain is found at 281 to 562; that stretch reads GRILKAANIL…QLMTLHASKG (282 aa).

It belongs to the helicase family. UvrD subfamily. In terms of assembly, homodimer.

It carries out the reaction Couples ATP hydrolysis with the unwinding of duplex DNA by translocating in the 3'-5' direction.. It catalyses the reaction ATP + H2O = ADP + phosphate + H(+). Functionally, rep helicase is a single-stranded DNA-dependent ATPase involved in DNA replication; it can initiate unwinding at a nick in the DNA. It binds to the single-stranded DNA and acts in a progressive fashion along the DNA in the 3' to 5' direction. The polypeptide is ATP-dependent DNA helicase Rep (Salmonella typhimurium (strain LT2 / SGSC1412 / ATCC 700720)).